Consider the following 535-residue polypeptide: EGF domain-specific O-linked N-acetylglucosamine transferase (535 aa).

Positions 1-16 (MFILLMFVLLLQEILA) are cleaved as a signal peptide. N-linked (GlcNAc...) asparagine glycosylation is found at N22 and N271. A Required for optimal activity motif is present at residues 303 to 305 (DYD). N-linked (GlcNAc...) asparagine glycosylation is found at N362 and N501.

Belongs to the glycosyltransferase 61 family.

It is found in the endoplasmic reticulum lumen. The enzyme catalyses L-seryl-[protein] + UDP-N-acetyl-alpha-D-glucosamine = 3-O-(N-acetyl-beta-D-glucosaminyl)-L-seryl-[protein] + UDP + H(+). It catalyses the reaction L-threonyl-[protein] + UDP-N-acetyl-alpha-D-glucosamine = 3-O-(N-acetyl-beta-D-glucosaminyl)-L-threonyl-[protein] + UDP + H(+). Its function is as follows. Catalyzes the transfer of a single N-acetylglucosamine from UDP-GlcNAc to a serine or threonine residue in extracellular proteins resulting in their modification with a beta-linked N-acetylglucosamine (O-GlcNAc). Specifically glycosylates the Thr residue located between the fifth and sixth conserved cysteines of folded EGF-like domains. This Gallus gallus (Chicken) protein is EGF domain-specific O-linked N-acetylglucosamine transferase (EOGT).